The primary structure comprises 378 residues: Plant intracellular Ras-group-related LRR protein 8 (378 aa).

The 77-residue stretch at 10–86 folds into the Ubiquitin-like domain; sequence PTITVQVKFG…VMLMASQGLH (77 aa). Residues 85 to 120 are disordered; sequence LHQGDGPITKNSSVPAPSTRRASNVKEAQIQKSDTN. Positions 93–106 are enriched in polar residues; it reads TKNSSVPAPSTRRA. 9 LRR repeats span residues 129 to 152, 153 to 176, 178 to 201, 202 to 225, 226 to 250, 252 to 271, 272 to 293, 294 to 317, and 319 to 344; these read WKATGIIALSDSSLKAVPEEVWGC, GSSIRVLDVSNNCIEAIPQEIAAL, SLQKLILTANDIADGNISWEGLTC, VQTLTVLSLSQNRLVTLPSSLGSI, THLRELRIANNRLENLPVEIGLLKH, EILIANNNRITSLPSSIGGC, ESLNEVDLSSNLLAELPEAFGN, LQHLKALSVRNNGLTSLPSAFFIK, and SQLITLDLHGTEITNDVLRQVDGWEE.

The protein belongs to the SHOC2 family. In terms of tissue distribution, widely expressed except in panicles.

In terms of biological role, leucine-rich repeat protein that likely mediates protein interactions, possibly in the context of signal transduction. The chain is Plant intracellular Ras-group-related LRR protein 8 (IRL8) from Oryza sativa subsp. japonica (Rice).